A 478-amino-acid polypeptide reads, in one-letter code: Ketoisovalerate oxidoreductase subunit VorA (478 aa).

As to quaternary structure, heterotrimer of the VorA, VorB and VorC subunits.

The protein is Ketoisovalerate oxidoreductase subunit VorA (vorA) of Methanothermobacter marburgensis (strain ATCC BAA-927 / DSM 2133 / JCM 14651 / NBRC 100331 / OCM 82 / Marburg) (Methanobacterium thermoautotrophicum).